A 378-amino-acid polypeptide reads, in one-letter code: Cell death-related nuclease 6 (378 aa).

A signal peptide spans Met1–Ala17. N-linked (GlcNAc...) asparagine glycosylation is found at Asn51, Asn92, and Asn111.

Belongs to the DNase II family.

Functionally, involved in apoptotic DNA degradation. This Caenorhabditis elegans protein is Cell death-related nuclease 6 (crn-6).